The chain runs to 284 residues: Four and a half LIM domains protein 5 (284 aa).

The segment at 8–32 (CQYCTASLLGKKYVLKDDSLFCVTC) adopts a C4-type zinc-finger fold. LIM zinc-binding domains are found at residues 39-100 (NYCE…ECSS), 101-160 (KCFH…KEFA), 161-220 (HYCN…LYAN), and 223-283 (VACS…MDSD).

In terms of assembly, interacts with CREM (via the third LIM domain). Interacts (via second LIM domain) with SPAG8.

It is found in the nucleus. May be involved in the regulation of spermatogenesis. Stimulates CREM transcriptional activity in a phosphorylation-independent manner. The polypeptide is Four and a half LIM domains protein 5 (FHL5) (Macaca fascicularis (Crab-eating macaque)).